Reading from the N-terminus, the 115-residue chain is Tyrosine-protein phosphatase 18 (115 aa).

The region spanning 1–115 (WLMIVEQKCR…ETGSDAPMVV (115 aa)) is the Tyrosine-protein phosphatase domain. A substrate-binding site is contributed by Asp-83.

Belongs to the protein-tyrosine phosphatase family.

The catalysed reaction is O-phospho-L-tyrosyl-[protein] + H2O = L-tyrosyl-[protein] + phosphate. This Styela plicata (Wrinkled sea squirt) protein is Tyrosine-protein phosphatase 18 (STY-18).